A 499-amino-acid chain; its full sequence is Nuclear receptor-binding protein 2 (499 aa).

Positions M1–P31 are disordered. Residues A7 to E17 show a composition bias toward basic and acidic residues. Residues D18–E28 show a composition bias toward acidic residues. Residues Q36–L304 form the Protein kinase domain. Residues A396–E416 form a disordered region. A phosphothreonine mark is found at T407 and T409.

Belongs to the protein kinase superfamily. Ser/Thr protein kinase family. In terms of tissue distribution, expressed in Purkinje cells of the cerebellum and neurons in the CA3 region of the hippocampus. Also detected in non-neural tissues including mesenchymal layer adjacent to epithelium in developing bronchi of the lung, the epithelium of the stomach as well as cells in the liver.

It localises to the cytoplasm. Its function is as follows. May regulate apoptosis of neural progenitor cells during their differentiation. The polypeptide is Nuclear receptor-binding protein 2 (Mus musculus (Mouse)).